The following is a 243-amino-acid chain: Phosphoribosylaminoimidazole-succinocarboxamide synthase (243 aa).

It belongs to the SAICAR synthetase family.

The enzyme catalyses 5-amino-1-(5-phospho-D-ribosyl)imidazole-4-carboxylate + L-aspartate + ATP = (2S)-2-[5-amino-1-(5-phospho-beta-D-ribosyl)imidazole-4-carboxamido]succinate + ADP + phosphate + 2 H(+). The protein operates within purine metabolism; IMP biosynthesis via de novo pathway; 5-amino-1-(5-phospho-D-ribosyl)imidazole-4-carboxamide from 5-amino-1-(5-phospho-D-ribosyl)imidazole-4-carboxylate: step 1/2. This Prochlorococcus marinus (strain MIT 9211) protein is Phosphoribosylaminoimidazole-succinocarboxamide synthase.